A 342-amino-acid polypeptide reads, in one-letter code: N-acetyl-gamma-glutamyl-phosphate reductase (342 aa).

The active site involves Cys-147.

The protein belongs to the NAGSA dehydrogenase family. Type 1 subfamily.

The protein localises to the cytoplasm. It carries out the reaction N-acetyl-L-glutamate 5-semialdehyde + phosphate + NADP(+) = N-acetyl-L-glutamyl 5-phosphate + NADPH + H(+). The protein operates within amino-acid biosynthesis; L-arginine biosynthesis; N(2)-acetyl-L-ornithine from L-glutamate: step 3/4. In terms of biological role, catalyzes the NADPH-dependent reduction of N-acetyl-5-glutamyl phosphate to yield N-acetyl-L-glutamate 5-semialdehyde. This is N-acetyl-gamma-glutamyl-phosphate reductase from Campylobacter jejuni subsp. doylei (strain ATCC BAA-1458 / RM4099 / 269.97).